The primary structure comprises 689 residues: MTDNNQNNENHENSSENSKADEMRAGAFERFTNRKKRFRENAQKNAEYSNHEASSHHKKEHRPNKKPNNHHKQKHAKTRNYAQEELDSNKVEGVTEILHVNERGTLGFHKELKKGVEANNKIQVEHLNPHYKMNLNSKASVKITPLGGLGEIGGNMMVIETPKSAIVIDAGMSFPKEGLFGVDILIPDFSYLHQIKDKIAGIIITHAHEDHIGATPYLFKELQFPLYGTPLSLGLIGSKFDEHGLKKYRSYFKIVEKRCPISVGEFIIEWIHITHSIIDSSALAIQTKAGTIIHTGDFKIDHTPVDNLPTDLYRLAHYGEKGVMLLLSDSTNSHKSGTTPSESTIAPAFDTLFKEAQGRVIMSTFSSNIHRVYQAIQYGIKYNRKIAVIGRSMEKNLDIARELGYIHLPYQSFIEANEVAKYPDNEILIVTTGSQGETMSALYRMATDEHRHISIKPNDLVIISAKAIPGNEASVSAVLNFLIKKEAKVAYQEFDNIHVSGHAAQEEQKLMLRLIKPKFFLPVHGEYNHVARHKQTAISCGVPEKNIYLMEDGDQVEVGPAFIKKVGTIKSGKSYVDNQSNLSIDTSIVQQREEVASAGVFVATIFVNKNKQALLESSQFSSLGLVGFKDEKPLIKEIQGGLEVLLKSSNAEILNNPKKLEDHTRNFIRKALFKKFRKYPAIICHAHSF.

The disordered stretch occupies residues 1–88; the sequence is MTDNNQNNEN…RNYAQEELDS (88 aa). The segment covering 9–24 has biased composition (basic and acidic residues); that stretch reads ENHENSSENSKADEMR. The segment covering 56 to 78 has biased composition (basic residues); the sequence is HHKKEHRPNKKPNNHHKQKHAKT. An N6-acetyllysine mark is found at K132 and K138. Zn(2+) contacts are provided by H206, H208, D210, H211, H275, and D297. An N6-acetyllysine mark is found at K321, K335, and K395. Substrate is bound at residue 498 to 502; sequence HVSGH. At K509 the chain carries N6-acetyllysine. H524 is a binding site for Zn(2+). N6-acetyllysine is present on residues K545, K632, and K647.

It belongs to the metallo-beta-lactamase superfamily. RNA-metabolizing metallo-beta-lactamase-like family. Bacterial RNase J subfamily. As to quaternary structure, homodimer. Homotetramer; dimer of homodimers. Interacts with RNA helicase RhpA, might be a member of a minimal RNA degradosome complex. The cofactor is Zn(2+). Acetylated on nine lysine residues. Some of the residues are acetylated by multiple different mechanisms. RimL is partially responsible for the acetylation of Lys-321, Lys-395 and Lys-647. HPB8_1270 homolog is partially responsible for the acetylation of Lys-321, Lys-395, Lys-509 and Lys-647. Acetyl-phosphate-mediated non-enzymatic acetylation pathway takes part in the acetylation of Lys-132, Lys-321, Lys-395, Lys-509 and Lys-647. Acetylation of the remaining residues Lys-138, Lys-335, Lys-545 and Lys-632 occurs by a yet undetermined mechanism. Acetylation on a number of these residues is important for growth regulation and proper cell morphology.

The protein resides in the cytoplasm. Catalytic activity is regulated by the balance between homodimers and homotetramers, with homotetramers being the active forms of this enzyme. Acetylation allosterically regulates the homooligomerization state and hence the catalytic activity. Its function is as follows. An RNase that has 5'-3' exoribonuclease and endoribonuclease activity. Degrades 5'-monophosphorylated ssRNA and dsRNA, considerably more active on ssRNA. Association with RhpA significantly increases the dsRNase activity. Degrades RNA substrate with hairpin structures at both ends with low activity, but presence of RhpA significantly increases the activity on this substrate. Stimulates ATPase activity of RNA helicase RhpA. Involved in stabilization of mRNA but apparently not rRNA. The sequence is that of Ribonuclease J from Helicobacter pylori (strain ATCC 700392 / 26695) (Campylobacter pylori).